The following is a 552-amino-acid chain: Oxygen-dependent choline dehydrogenase (552 aa).

7 to 36 contacts FAD; that stretch reads DYIIIGAGSAGNVLAARLTEDKDTTVLLLE. Histidine 477 (proton acceptor) is an active-site residue.

Belongs to the GMC oxidoreductase family. It depends on FAD as a cofactor.

It carries out the reaction choline + A = betaine aldehyde + AH2. The enzyme catalyses betaine aldehyde + NAD(+) + H2O = glycine betaine + NADH + 2 H(+). It functions in the pathway amine and polyamine biosynthesis; betaine biosynthesis via choline pathway; betaine aldehyde from choline (cytochrome c reductase route): step 1/1. Its function is as follows. Involved in the biosynthesis of the osmoprotectant glycine betaine. Catalyzes the oxidation of choline to betaine aldehyde and betaine aldehyde to glycine betaine at the same rate. This chain is Oxygen-dependent choline dehydrogenase, found in Acinetobacter baumannii (strain AB307-0294).